The sequence spans 100 residues: Urease subunit gamma (100 aa).

This sequence belongs to the urease gamma subunit family. As to quaternary structure, heterotrimer of UreA (gamma), UreB (beta) and UreC (alpha) subunits. Three heterotrimers associate to form the active enzyme.

It localises to the cytoplasm. It catalyses the reaction urea + 2 H2O + H(+) = hydrogencarbonate + 2 NH4(+). It functions in the pathway nitrogen metabolism; urea degradation; CO(2) and NH(3) from urea (urease route): step 1/1. The protein is Urease subunit gamma of Chromohalobacter salexigens (strain ATCC BAA-138 / DSM 3043 / CIP 106854 / NCIMB 13768 / 1H11).